Here is a 257-residue protein sequence, read N- to C-terminus: Flap endonuclease Xni (257 aa).

A Mg(2+)-binding site is contributed by D112. The region spanning 169-256 (EQKKLVEFWA…LGFSLKQLRL (88 aa)) is the 5'-3' exonuclease domain. F179, A180, P188, V190, and I193 together coordinate K(+). Positions 192-197 (GIGTKS) are interaction with DNA.

It belongs to the Xni family. The cofactor is Mg(2+). Requires K(+) as cofactor.

Its function is as follows. Has flap endonuclease activity. During DNA replication, flap endonucleases cleave the 5'-overhanging flap structure that is generated by displacement synthesis when DNA polymerase encounters the 5'-end of a downstream Okazaki fragment. The polypeptide is Flap endonuclease Xni (Pseudoalteromonas translucida (strain TAC 125)).